Consider the following 65-residue polypeptide: Weak toxin CM-10 (65 aa).

Disulfide bonds link C3–C24, C6–C11, C17–C42, C46–C57, and C58–C63.

The protein belongs to the three-finger toxin family. Ancestral subfamily. Orphan group II sub-subfamily. As to expression, expressed by the venom gland.

It localises to the secreted. Its function is as follows. Binds with low affinity to muscular (alpha-1-beta-1-delta-epsilon/CHRNA1-CHRNB1-CHRND-CHRNE) and very low affinity to neuronal (alpha-7/CHRNA7) nicotinic acetylcholine receptor (nAChR). This chain is Weak toxin CM-10, found in Naja nivea (Cape cobra).